A 546-amino-acid chain; its full sequence is Hydroxylamine reductase (546 aa).

4 residues coordinate [4Fe-4S] cluster: C3, C6, C18, and C25. Positions 245, 269, 313, 401, 429, 454, 488, and 490 each coordinate hybrid [4Fe-2O-2S] cluster. C401 is subject to Cysteine persulfide.

This sequence belongs to the HCP family. The cofactor is [4Fe-4S] cluster. It depends on hybrid [4Fe-2O-2S] cluster as a cofactor.

The protein resides in the cytoplasm. The enzyme catalyses A + NH4(+) + H2O = hydroxylamine + AH2 + H(+). With respect to regulation, inhibited by cyanide and by sulfide and iron reagents such as dithioerythritol, 2,2'-dipyridyl and o-phenanthroline. In terms of biological role, could be involved in assimilation and/or detoxification of hydroxylamine, which is a toxic compound that may be formed during nitrate/nitrite assimilation. Catalyzes the reduction of hydroxylamine to form NH(3) and H(2)O. It has a low reductase activity with FAD, FMN, benzyl viologen and bromphenol blue as electrons donors, but it is not able to use NAD or NADP. The sequence is that of Hydroxylamine reductase from Rhodobacter capsulatus (Rhodopseudomonas capsulata).